The primary structure comprises 201 residues: Recombination protein RecR (201 aa).

A C4-type zinc finger spans residues 60–75 (CSTCGNVDTADPCMIC). The Toprim domain occupies 83–178 (GTIIVVEDVS…KVTRLAHGVP (96 aa)).

Belongs to the RecR family.

May play a role in DNA repair. It seems to be involved in an RecBC-independent recombinational process of DNA repair. It may act with RecF and RecO. The protein is Recombination protein RecR of Mesorhizobium japonicum (strain LMG 29417 / CECT 9101 / MAFF 303099) (Mesorhizobium loti (strain MAFF 303099)).